A 417-amino-acid polypeptide reads, in one-letter code: MFPRDARLDMYDPELAKAIAAEVRRQEDHVELIASENYCSTLVMQVQGSQLTNKYAEGYSGKRYYGGCEYVDIAEQLAIERAKKLFGADYANVQPHSGSQANQAVYFALLQPGDTILGMSLAHGGHLTHGANVNVSGKLFNAVQYGVNAQGLIDYEAVESLALEHRPKMVVAGFSAYSQKIDWARFRAIADQVGAYLLVDMAHVAGLVAAGVYPSPLPHAHVVTSTTHKTLRGPRGGIIVAQAPQEALVKKLQSIVFPGIQGGPLMHVIAAKAVAFKEALEPAFKVYQQQVVKNAKAMAGTLMLRGYKIVSGGTENHLMLVDMIGRDVSGKDAEGALGQVHITVNKNAVPDDPRSPFVTSGLRLGTPAVTTRGYQEQDCVDLAHWIADVLDAPADVTVIAAVREKVAAQCKKYPVYR.

Residues Leu121 and 125–127 each bind (6S)-5,6,7,8-tetrahydrofolate; that span reads GHL. Lys229 bears the N6-(pyridoxal phosphate)lysine mark. Residue 355–357 participates in (6S)-5,6,7,8-tetrahydrofolate binding; it reads SPF.

Belongs to the SHMT family. In terms of assembly, homodimer. The cofactor is pyridoxal 5'-phosphate.

Its subcellular location is the cytoplasm. It carries out the reaction (6R)-5,10-methylene-5,6,7,8-tetrahydrofolate + glycine + H2O = (6S)-5,6,7,8-tetrahydrofolate + L-serine. It functions in the pathway one-carbon metabolism; tetrahydrofolate interconversion. It participates in amino-acid biosynthesis; glycine biosynthesis; glycine from L-serine: step 1/1. Its function is as follows. Catalyzes the reversible interconversion of serine and glycine with tetrahydrofolate (THF) serving as the one-carbon carrier. This reaction serves as the major source of one-carbon groups required for the biosynthesis of purines, thymidylate, methionine, and other important biomolecules. Also exhibits THF-independent aldolase activity toward beta-hydroxyamino acids, producing glycine and aldehydes, via a retro-aldol mechanism. This is Serine hydroxymethyltransferase from Xylella fastidiosa (strain M23).